The following is a 243-amino-acid chain: Type II restriction enzyme NlaIV (243 aa).

It catalyses the reaction Endonucleolytic cleavage of DNA to give specific double-stranded fragments with terminal 5'-phosphates.. A P subtype restriction enzyme that recognizes the double-stranded sequence 5'-GGNNCC-3' and cleaves after N-3. This chain is Type II restriction enzyme NlaIV (nlaIVR), found in Neisseria lactamica.